The chain runs to 618 residues: Dihydroxy-acid dehydratase (618 aa).

Mg(2+) is bound at residue Asp81. Residue Cys122 participates in [2Fe-2S] cluster binding. Asp123 and Lys124 together coordinate Mg(2+). Position 124 is an N6-carboxylysine (Lys124). Cys195 contacts [2Fe-2S] cluster. A Mg(2+)-binding site is contributed by Glu492. Ser518 (proton acceptor) is an active-site residue.

Belongs to the IlvD/Edd family. Homodimer. Requires [2Fe-2S] cluster as cofactor. It depends on Mg(2+) as a cofactor.

The enzyme catalyses (2R)-2,3-dihydroxy-3-methylbutanoate = 3-methyl-2-oxobutanoate + H2O. It carries out the reaction (2R,3R)-2,3-dihydroxy-3-methylpentanoate = (S)-3-methyl-2-oxopentanoate + H2O. Its pathway is amino-acid biosynthesis; L-isoleucine biosynthesis; L-isoleucine from 2-oxobutanoate: step 3/4. The protein operates within amino-acid biosynthesis; L-valine biosynthesis; L-valine from pyruvate: step 3/4. In terms of biological role, functions in the biosynthesis of branched-chain amino acids. Catalyzes the dehydration of (2R,3R)-2,3-dihydroxy-3-methylpentanoate (2,3-dihydroxy-3-methylvalerate) into 2-oxo-3-methylpentanoate (2-oxo-3-methylvalerate) and of (2R)-2,3-dihydroxy-3-methylbutanoate (2,3-dihydroxyisovalerate) into 2-oxo-3-methylbutanoate (2-oxoisovalerate), the penultimate precursor to L-isoleucine and L-valine, respectively. The polypeptide is Dihydroxy-acid dehydratase (Zymomonas mobilis subsp. mobilis (strain ATCC 31821 / ZM4 / CP4)).